Consider the following 596-residue polypeptide: Nitrite reductase (596 aa).

The first 29 residues, 1–29, serve as a signal peptide directing secretion; the sequence is MRQRTPFARPGLLASAALALVLGPLAVAA. The interval 30–76 is N-terminal tail; sequence QEQAAPPKDPAAALEDHKTKTDNRYEPSLDNLAQQDVAALGAPEGIP. H46 is a binding site for heme c. Residues Y54 and S57 each coordinate heme d1. The Cytochrome c domain occupies 77-162; it reads ALSDAQYNEA…ANYLLLDPAA (86 aa). Residues C94, C97, H98, K108, and Y122 each coordinate heme c. The heme d1 site is built by W138, R203, H229, R232, R245, R272, Y292, R420, Q536, and T583. The interval 163 to 596 is D1-heme domain; sequence PPEFGMKEMR…NVYNTMTDTY (434 aa).

In terms of assembly, homodimer. Requires heme c as cofactor. It depends on heme as a cofactor.

The protein resides in the periplasm. It catalyses the reaction nitric oxide + Fe(III)-[cytochrome c] + H2O = Fe(II)-[cytochrome c] + nitrite + 2 H(+). It carries out the reaction A + NH4(+) + H2O = hydroxylamine + AH2 + H(+). In terms of biological role, inactivation of this cytochrome oxidase results in the loss of nitrite and nitric oxide reductase activities, but not of nitrous oxide reductase activity. The polypeptide is Nitrite reductase (nirS) (Paracoccus denitrificans (strain Pd 1222)).